The sequence spans 265 residues: MDFKYTEEKETIKINNIMIHKYTVLYTSNCIMDIYSEEEKITCFSNRLVFLERGVNISVRMQKQILSEKPYVAFRLNGDMLRHLKDALMIIYGMSKIDTNACRSMSRKIMTTEVNKTLLDELKNINSHDNSAFISSLIYLISKLENNEKIIESIYISSVSFFSDKVRNLIEKDLSRKWTLGIIADAFNASEITIRKRLESENTNFNQILMQLRMSKAALLLLENSYQISQISNMIGISSASYFIRIFNKHYGVTPKQFFTYFKGG.

The decanoate site is built by His20 and Arg75. In terms of domain architecture, HTH araC/xylS-type spans 164 to 261 (DKVRNLIEKD…GVTPKQFFTY (98 aa)). 2 DNA-binding regions (H-T-H motif) span residues 181–202 (GIIA…ESEN) and 228–251 (ISQI…NKHY).

Homodimer; each subunit binds one decanoate molecule.

The protein localises to the cytoplasm. Its activity is regulated as follows. Rns-dependent expression of pilins and outer membrane proteins CexE-alpha and CexE-epsilon are inhibited in vivo by decanoic acid (decanoate); has no effect on expression of DnaK or flagellins. Decanoate relieves Rns-dependent repression of nlpA. In terms of biological role, a transcription factor required for the expression of the CS1 and CS2 adhesins of enterotoxigenic E.coli. Required for expression of pilins and some outer membrane lipoproteins. Represses expression of nlpA. The chain is DNA-binding dual transcriptional regulator Rns from Escherichia coli.